A 513-amino-acid chain; its full sequence is Na(+)/H(+) antiporter NhaB (513 aa).

Helical transmembrane passes span 23–43 (LALI…PFVA), 52–72 (IFTL…LLAI), 97–117 (LLLM…LFIF), 120–140 (LLLS…AAAF), 144–164 (FLDA…FYGI), 202–222 (LMMH…VGEP), 238–258 (FFLR…LTCL), 303–323 (AIIG…VGLI), 348–368 (TESL…AVII), 391–411 (LFYI…VGTI), 447–467 (ATPN…APLI), and 475–495 (VWMA…CVEF).

Belongs to the NhaB Na(+)/H(+) (TC 2.A.34) antiporter family.

It is found in the cell inner membrane. It carries out the reaction 2 Na(+)(in) + 3 H(+)(out) = 2 Na(+)(out) + 3 H(+)(in). Its function is as follows. Na(+)/H(+) antiporter that extrudes sodium in exchange for external protons. This is Na(+)/H(+) antiporter NhaB from Escherichia coli O6:H1 (strain CFT073 / ATCC 700928 / UPEC).